The sequence spans 172 residues: NADH-quinone oxidoreductase subunit B (172 aa).

Positions 52, 53, 117, and 147 each coordinate [4Fe-4S] cluster.

This sequence belongs to the complex I 20 kDa subunit family. NDH-1 is composed of 14 different subunits. Subunits NuoB, C, D, E, F, and G constitute the peripheral sector of the complex. Requires [4Fe-4S] cluster as cofactor.

It is found in the cell inner membrane. It catalyses the reaction a quinone + NADH + 5 H(+)(in) = a quinol + NAD(+) + 4 H(+)(out). NDH-1 shuttles electrons from NADH, via FMN and iron-sulfur (Fe-S) centers, to quinones in the respiratory chain. Couples the redox reaction to proton translocation (for every two electrons transferred, four hydrogen ions are translocated across the cytoplasmic membrane), and thus conserves the redox energy in a proton gradient. The chain is NADH-quinone oxidoreductase subunit B from Ehrlichia ruminantium (strain Gardel).